The following is a 218-amino-acid chain: Hypoxanthine-guanine phosphoribosyltransferase (218 aa).

Residues Lys-69, 134–142 (EDIIDTGKT), Lys-166, 186–188 (KFV), and Asp-194 contribute to the GMP site. Residue Asp-138 is the Proton acceptor of the active site. Residue Asp-194 participates in Mg(2+) binding.

The protein belongs to the purine/pyrimidine phosphoribosyltransferase family. As to quaternary structure, homotetramer. Requires Mg(2+) as cofactor.

Its subcellular location is the cytoplasm. It catalyses the reaction IMP + diphosphate = hypoxanthine + 5-phospho-alpha-D-ribose 1-diphosphate. The catalysed reaction is GMP + diphosphate = guanine + 5-phospho-alpha-D-ribose 1-diphosphate. Its pathway is purine metabolism; IMP biosynthesis via salvage pathway; IMP from hypoxanthine: step 1/1. Its function is as follows. Converts guanine to guanosine monophosphate, and hypoxanthine to inosine monophosphate. Transfers the 5-phosphoribosyl group from 5-phosphoribosylpyrophosphate onto the purine. Plays a central role in the generation of purine nucleotides through the purine salvage pathway. The protein is Hypoxanthine-guanine phosphoribosyltransferase (HPRT1) of Gallus gallus (Chicken).